The following is a 622-amino-acid chain: Probable potassium transport system protein Kup (622 aa).

12 consecutive transmembrane segments (helical) span residues 8-28 (LAAL…TSVL), 50-70 (ILSI…VVLV), 103-123 (LAVG…TPAI), 137-157 (PHFK…LFAV), 168-188 (FFGP…LAHI), 203-223 (ALGF…AVVL), 247-267 (WFGV…ALLL), 285-305 (ALIP…QALI), 337-357 (IYMP…VVMF), 366-386 (AYGI…FFVI), 393-413 (PLAL…AFFA), and 419-439 (LFQG…LMMT).

This sequence belongs to the HAK/KUP transporter (TC 2.A.72) family.

Its subcellular location is the cell inner membrane. It carries out the reaction K(+)(in) + H(+)(in) = K(+)(out) + H(+)(out). Transport of potassium into the cell. Likely operates as a K(+):H(+) symporter. In Verminephrobacter eiseniae (strain EF01-2), this protein is Probable potassium transport system protein Kup.